The sequence spans 333 residues: Holliday junction branch migration complex subunit RuvB (333 aa).

Residues 1–182 (MDERLLSGES…FGVLSRLEYY (182 aa)) form a large ATPase domain (RuvB-L) region. Residues Leu-21, Arg-22, Gly-63, Lys-66, Thr-67, Thr-68, 129–131 (EDF), Arg-172, Tyr-182, and Arg-219 each bind ATP. Residue Thr-67 coordinates Mg(2+). The segment at 183–253 (TVDQLSAIVE…ITQMALELLQ (71 aa)) is small ATPAse domain (RuvB-S). The interval 256–333 (KLGLDHIDHK…EHFGMEMPKV (78 aa)) is head domain (RuvB-H). Arg-311 and Arg-316 together coordinate DNA.

Belongs to the RuvB family. Homohexamer. Forms an RuvA(8)-RuvB(12)-Holliday junction (HJ) complex. HJ DNA is sandwiched between 2 RuvA tetramers; dsDNA enters through RuvA and exits via RuvB. An RuvB hexamer assembles on each DNA strand where it exits the tetramer. Each RuvB hexamer is contacted by two RuvA subunits (via domain III) on 2 adjacent RuvB subunits; this complex drives branch migration. In the full resolvosome a probable DNA-RuvA(4)-RuvB(12)-RuvC(2) complex forms which resolves the HJ.

It localises to the cytoplasm. It catalyses the reaction ATP + H2O = ADP + phosphate + H(+). The RuvA-RuvB-RuvC complex processes Holliday junction (HJ) DNA during genetic recombination and DNA repair, while the RuvA-RuvB complex plays an important role in the rescue of blocked DNA replication forks via replication fork reversal (RFR). RuvA specifically binds to HJ cruciform DNA, conferring on it an open structure. The RuvB hexamer acts as an ATP-dependent pump, pulling dsDNA into and through the RuvAB complex. RuvB forms 2 homohexamers on either side of HJ DNA bound by 1 or 2 RuvA tetramers; 4 subunits per hexamer contact DNA at a time. Coordinated motions by a converter formed by DNA-disengaged RuvB subunits stimulates ATP hydrolysis and nucleotide exchange. Immobilization of the converter enables RuvB to convert the ATP-contained energy into a lever motion, pulling 2 nucleotides of DNA out of the RuvA tetramer per ATP hydrolyzed, thus driving DNA branch migration. The RuvB motors rotate together with the DNA substrate, which together with the progressing nucleotide cycle form the mechanistic basis for DNA recombination by continuous HJ branch migration. Branch migration allows RuvC to scan DNA until it finds its consensus sequence, where it cleaves and resolves cruciform DNA. The sequence is that of Holliday junction branch migration complex subunit RuvB from Bacillus anthracis (strain A0248).